A 447-amino-acid chain; its full sequence is Signal recognition particle 54 kDa protein (447 aa).

Residues 103-110 (GVQGSGKT), 185-189 (DTAGR), and 245-248 (TKMD) each bind GTP.

This sequence belongs to the GTP-binding SRP family. SRP54 subfamily. In terms of assembly, part of the signal recognition particle protein translocation system, which is composed of SRP and FtsY. Archaeal SRP consists of a 7S RNA molecule of 300 nucleotides and two protein subunits: SRP54 and SRP19.

It is found in the cytoplasm. The catalysed reaction is GTP + H2O = GDP + phosphate + H(+). Involved in targeting and insertion of nascent membrane proteins into the cytoplasmic membrane. Binds to the hydrophobic signal sequence of the ribosome-nascent chain (RNC) as it emerges from the ribosomes. The SRP-RNC complex is then targeted to the cytoplasmic membrane where it interacts with the SRP receptor FtsY. The polypeptide is Signal recognition particle 54 kDa protein (Saccharolobus islandicus (strain M.16.27) (Sulfolobus islandicus)).